The following is a 397-amino-acid chain: Phosphoglycerate kinase (397 aa).

Substrate-binding positions include D25 to N27, R41, H64 to R67, R118, and R151. Residues K202, E324, and G350–T353 each bind ATP.

The protein belongs to the phosphoglycerate kinase family. Monomer.

The protein resides in the cytoplasm. The catalysed reaction is (2R)-3-phosphoglycerate + ATP = (2R)-3-phospho-glyceroyl phosphate + ADP. It participates in carbohydrate degradation; glycolysis; pyruvate from D-glyceraldehyde 3-phosphate: step 2/5. The chain is Phosphoglycerate kinase from Acidovorax ebreus (strain TPSY) (Diaphorobacter sp. (strain TPSY)).